The sequence spans 250 residues: Phosphate import ATP-binding protein PstB (250 aa).

The ABC transporter domain maps to Leu-4–Val-245. Gly-36 to Ser-43 serves as a coordination point for ATP.

This sequence belongs to the ABC transporter superfamily. Phosphate importer (TC 3.A.1.7) family. The complex is composed of two ATP-binding proteins (PstB), two transmembrane proteins (PstC and PstA) and a solute-binding protein (PstS).

The protein resides in the cell membrane. It carries out the reaction phosphate(out) + ATP + H2O = ADP + 2 phosphate(in) + H(+). In terms of biological role, part of the ABC transporter complex PstSACB involved in phosphate import. Responsible for energy coupling to the transport system. This chain is Phosphate import ATP-binding protein PstB, found in Pyrobaculum aerophilum (strain ATCC 51768 / DSM 7523 / JCM 9630 / CIP 104966 / NBRC 100827 / IM2).